The primary structure comprises 884 residues: Lon protease homolog 2, peroxisomal (884 aa).

The Lon N-terminal domain occupies 12–255 (LAILPFRNKV…KATELVDRHL (244 aa)). Residues 67–101 (SLLSPGVGSDSGEGGSKAPGGSAGESTKQDTKNGK) are disordered. Over residues 75–89 (SDSGEGGSKAPGGSA) the composition is skewed to gly residues. 408–415 (GPPGVGKT) contacts ATP. One can recognise a Lon proteolytic domain in the interval 689–874 (VASPGVSVGL…EEVLDHAFEG (186 aa)). Residues S780 and K823 contribute to the active site. The short motif at 882-884 (SKL) is the Microbody targeting signal element.

The protein belongs to the peptidase S16 family. As to expression, expressed in roots, leaves and panicles.

The protein resides in the peroxisome matrix. It carries out the reaction Hydrolysis of proteins in presence of ATP.. Functionally, ATP-dependent serine protease that mediates the selective degradation of misfolded and unassembled polypeptides in the peroxisomal matrix. Necessary for type 2 peroxisome targeting signal (PTS2)-containing protein processing and facilitates peroxisome matrix protein import. The chain is Lon protease homolog 2, peroxisomal (LON1) from Oryza sativa subsp. indica (Rice).